The sequence spans 445 residues: tRNA modification GTPase MnmE (445 aa).

The (6S)-5-formyl-5,6,7,8-tetrahydrofolate site is built by Arg20, Glu79, and Lys119. Positions 215–371 (GLKLAIIGPP…ILKNIEEIAE (157 aa)) constitute a TrmE-type G domain. Asn225 is a K(+) binding site. GTP contacts are provided by residues 225-230 (NAGKSS), 244-250 (SNIAGTT), and 269-272 (DTAG). Ser229 is a binding site for Mg(2+). Residues Ser244, Ile246, and Thr249 each contribute to the K(+) site. Thr250 provides a ligand contact to Mg(2+). (6S)-5-formyl-5,6,7,8-tetrahydrofolate is bound at residue Lys445.

It belongs to the TRAFAC class TrmE-Era-EngA-EngB-Septin-like GTPase superfamily. TrmE GTPase family. In terms of assembly, homodimer. Heterotetramer of two MnmE and two MnmG subunits. The cofactor is K(+).

The protein resides in the cytoplasm. Its function is as follows. Exhibits a very high intrinsic GTPase hydrolysis rate. Involved in the addition of a carboxymethylaminomethyl (cmnm) group at the wobble position (U34) of certain tRNAs, forming tRNA-cmnm(5)s(2)U34. The chain is tRNA modification GTPase MnmE from Rickettsia bellii (strain OSU 85-389).